The sequence spans 2400 residues: Retinitis pigmentosa 1-like 1 protein (2400 aa).

2 Doublecortin domains span residues 34–118 (KKIT…GPGR) and 152–231 (RRIL…PAMK). 6 disordered regions span residues 104-152 (CSDK…KTPR), 230-310 (MKNA…DDMK), 444-1064 (GRER…DREA), 1188-1251 (AMTE…GDLE), 1275-1501 (EAER…GAAE), and 1697-2400 (RGEH…DLDF). The span at 242–251 (SGLTSRNKNG) shows a compositional bias: polar residues. The segment covering 277–287 (RPGPSNPPVGP) has biased composition (pro residues). Positions 450–460 (QDSASPASSTG) are enriched in polar residues. 2 stretches are compositionally biased toward low complexity: residues 530 to 543 (GASSDSSASTGSHE) and 573 to 584 (DPASPALSLSSL). Residues 591–601 (AETQGQGTEQA) show a composition bias toward polar residues. Composition is skewed to low complexity over residues 625–637 (SSTPSTCTSSQQG) and 645–654 (ASAMSSPSSP). A compositionally biased stretch (basic residues) spans 661-670 (PRGHPRHSHY). Composition is skewed to polar residues over residues 711–740 (TRTQASGNLRPPSSGSLPSQDLLGTSSATV) and 825–835 (CCSQPGTQPAQ). 3 stretches are compositionally biased toward low complexity: residues 864-880 (QRRSSSCGSTGSSHQST), 903-921 (PNSGASRRSSASQGAGSRG), and 941-953 (SGVSPSSLPRSSP). Polar residues-rich tracts occupy residues 1223 to 1238 (LVTQGTELPLKTSNQR) and 1285 to 1299 (ASSNLEQLAENTVQE). A 1-1; approximate repeat occupies 1292-1307 (LAENTVQEEVQLEETK). The interval 1292-1342 (LAENTVQEEVQLEETKEGTEGEGLQEEAVQLEETKTEEGLQEEGVQLEETK) is 3 X 16 AA approximate tandem repeats of T-E-E-G-L-Q-E-E-G-V-Q-L-E-E-T-K. One copy of the 1-2; approximate repeat lies at 1310–1326 (TEGEGLQEEAVQLEETK). A 1-3 repeat occupies 1327 to 1342 (TEEGLQEEGVQLEETK). Over residues 1346-1363 (GEGQQEEEAQLEEIEETG) the composition is skewed to acidic residues. Positions 1434–1445 (RASASAEPCPAE) are enriched in low complexity. Composition is skewed to polar residues over residues 1460 to 1472 (TDPSASERQSGSQ) and 1489 to 1501 (EHTQAQPTQGAAE). The span at 1726-1736 (AEGGLGPGLSQ) shows a compositional bias: gly residues. Composition is skewed to basic and acidic residues over residues 1752-1762 (LNRDKDPKLGE) and 1769-1778 (AQEREGKTHN). Tandem repeats lie at residues 1836–1851 (EAPEAEGEAQPESEGV), 1852–1867 (EAPEAEGDAQEAEGEA), and 1875–1890 (EAPEAEGEAQPESEDV). 2 stretches are compositionally biased toward acidic residues: residues 1836 to 1909 (EAPE…AEAP) and 1920 to 1948 (ESVEALETEGEDEPESEGAEAQEAEEAAQ). The tract at residues 1836–2244 (EAPEAEGEAQ…GEAQPESEGE (409 aa)) is 25 X 16 AA approximate tandem repeats of [ED]-[AT]-[PQ]-[ED]-[AVT]-E-[GKE]-[ED]-[AMT]-Q-[EPK]-[EAT]-[TSELP]-[EG]-[EGSQDI]-[AVIE]. A 2-4; approximate repeat occupies 1891 to 1906 (ETPEAEWEVQPESEGA). Residues 1907-1921 (EAPEAEKEAQPETES) form a 2-5 repeat. The 2-6; approximate repeat unit spans residues 1923–1938 (EALETEGEDEPESEGA). Positions 1934–2017 (ESEGAEAQEA…EMQEAEEEAQ (84 aa)) form a coiled coil. One copy of the 2-7 repeat lies at 1939-1954 (EAQEAEEAAQEAEGQT). The span at 1949–1958 (EAEGQTQPES) shows a compositional bias: low complexity. One copy of the 2-8; approximate repeat lies at 1955–1970 (QPESEVIESQEAEEEA). Composition is skewed to acidic residues over residues 1959-2022 (EVIE…ESDG), 2048-2075 (AQPESDGVEAPEAEEEAQEAEGEVQEAE), 2083-2108 (EDVDAQEAEGEAQPESEGVEAPEAEG), and 2117-2245 (EAPE…EGET). The 2-9; approximate repeat unit spans residues 1971 to 1984 (QPESEDVEALEVEV). Repeat copies occupy residues 1985-2000 (ETQEAEGEAQPESEDV) and 2001-2016 (EAPEAEGEMQEAEEEA). Residues 2017–2031 (QPESDGVEAQPKSEG) form a 2-12; approximate repeat. The 2-13d repeat unit spans residues 2033–2048 (EAQEVEGETQKTEGDA). The stretch at 2054–2081 (GVEAPEAEEEAQEAEGEVQEAEGEAHPE) forms a coiled coil. A 2-14 repeat occupies 2056-2071 (EAPEAEEEAQEAEGEV). Residues 2072–2085 (QEAEGEAHPESEDV) form a 2-15; approximate repeat. 10 consecutive repeat copies span residues 2086–2101 (DAQEAEGEAQPESEGV), 2102–2116 (EAPEAEGEAQKAEGI), 2117–2132 (EAPETEGEAQPESEGI), 2133–2148 (EAPEAEGEAQPESEGV), 2149–2164 (EAQDAEGEAQPESEGI), 2165–2180 (EAQEAEEEAQPELEGV), 2181–2196 (EAPEAEGEAQPESEGI), 2197–2212 (EAPEAEGEAQPELEGV), 2213–2228 (EAPEAEEEAQPEPEGV), and 2229–2244 (ETPEAEGEAQPESEGE). A compositionally biased stretch (polar residues) spans 2292 to 2308 (PGSQTGPSSSRASSWGN). Over residues 2312–2327 (KDSENDHVLGDTRSPD) the composition is skewed to basic and acidic residues.

Interacts with RP1; has a synergistic effect with RP1 in photoreceptor differentiation. Retinal-specific; expressed in photoreceptor.

The protein resides in the cytoplasm. It localises to the cytoskeleton. Its subcellular location is the cilium axoneme. The protein localises to the cell projection. It is found in the cilium. The protein resides in the photoreceptor outer segment. Its function is as follows. Required for the differentiation of photoreceptor cells. Plays a role in the organization of outer segment of rod and cone photoreceptors. This Homo sapiens (Human) protein is Retinitis pigmentosa 1-like 1 protein (RP1L1).